A 118-amino-acid polypeptide reads, in one-letter code: UPF0342 protein BT9727_0768 (118 aa).

Belongs to the UPF0342 family.

The polypeptide is UPF0342 protein BT9727_0768 (Bacillus thuringiensis subsp. konkukian (strain 97-27)).